Here is a 549-residue protein sequence, read N- to C-terminus: E-selectin (549 aa).

The first 21 residues, 1-21 (MNASCFLSALTFVLLIGKSIA), serve as a signal peptide directing secretion. The 118-residue stretch at 22 to 139 (WYYNASSELM…CDKKKLALCY (118 aa)) folds into the C-type lectin domain. The Extracellular portion of the chain corresponds to 22–494 (WYYNASSELM…CEAPANPPRP (473 aa)). 2 N-linked (GlcNAc...) asparagine glycosylation sites follow: Asn25 and Asn60. Intrachain disulfides connect Cys40-Cys138, Cys111-Cys130, Cys143-Cys154, Cys148-Cys163, Cys165-Cys174, Cys180-Cys225, Cys193-Cys206, Cys210-Cys238, Cys243-Cys287, Cys256-Cys269, Cys273-Cys300, Cys305-Cys350, Cys336-Cys363, Cys368-Cys413, Cys399-Cys426, Cys431-Cys472, and Cys458-Cys485. Positions 101, 103, and 109 each coordinate Ca(2+). Residues 101–109 (EPNNKQRNE), 113–118 (EIYIQR), and 126–128 (NDE) each bind a carbohydrate. The Ca(2+) site is built by Asn126 and Asp127. The 36-residue stretch at 140–175 (TASCTNTSCSGHGECVETINSYTCKCHPGFLGPKCD) folds into the EGF-like domain. N-linked (GlcNAc...) asparagine glycosylation occurs at Asn145. Sushi domains lie at 178 to 240 (VTCQ…ACHV), 241 to 302 (VECK…SCKA), 303 to 365 (VTCD…VCKA), 366 to 428 (SQCE…TCAG), and 429 to 487 (VQCS…TCEA). Asn192 and Asn203 each carry an N-linked (GlcNAc...) asparagine glycan. N-linked (GlcNAc...) asparagine glycosylation is present at Asn266. 3 N-linked (GlcNAc...) asparagine glycosylation sites follow: Asn313, Asn320, and Asn333. N-linked (GlcNAc...) asparagine glycans are attached at residues Asn441 and Asn465. A helical membrane pass occupies residues 495–516 (LVVALSVAATSLLTLSSLIYVL). The Cytoplasmic portion of the chain corresponds to 517–549 (KRFFWKKAKKFVPASSCQSLQSFENYQGPSYII).

This sequence belongs to the selectin/LECAM family. As to quaternary structure, interacts with SELPLG/PSGL1 and PODXL2 through the sialyl Lewis X epitope. SELPLG sulfation appears not to be required for this interaction.

The protein localises to the cell membrane. Cell-surface glycoprotein having a role in immunoadhesion. Mediates in the adhesion of blood neutrophils in cytokine-activated endothelium through interaction with SELPLG/PSGL1. May have a role in capillary morphogenesis. In Rattus norvegicus (Rat), this protein is E-selectin (Sele).